A 1101-amino-acid polypeptide reads, in one-letter code: Rho GTPase-activating protein 30 (1101 aa).

The Rho-GAP domain maps to 20 to 215; it reads CDLREHLQHS…FILTHVDQLF (196 aa). Disordered regions lie at residues 305–397 and 450–499; these read RKLP…VRAL and LQPR…LEDS. The span at 309–319 shows a compositional bias: basic and acidic residues; sequence LRVEDREEKSS. The span at 348-367 shows a compositional bias: low complexity; sequence SSSSQPSSLMPESLESNSME. Over residues 451-465 the composition is skewed to pro residues; the sequence is QPRPSPALGPGPPGS. Phosphoserine is present on S578. Residues 622–848 form a disordered region; sequence LGPKPINWEG…EQKSIDVETE (227 aa). Basic and acidic residues-rich tracts occupy residues 659–677, 686–762, 786–821, and 829–844; these read TRQE…REEA, EAGK…KGDD, EVVH…HSED, and DDRK…KSID. S875 is modified (phosphoserine). 2 disordered regions span residues 878–901 and 968–987; these read EINE…GMEA and CPRP…GSRA. S996 carries the phosphoserine modification. A disordered region spans residues 1044 to 1076; sequence SRPLSCLERPPEGTEGSEPRSRLSLPPRELHPV. Over residues 1052–1064 the composition is skewed to basic and acidic residues; sequence RPPEGTEGSEPRS.

Interacts with RHOU in a GTP-independent manner.

It localises to the cytoplasmic vesicle. Its function is as follows. GTPase-activating protein (GAP) for RAC1 and RHOA, but not for CDC42. The protein is Rho GTPase-activating protein 30 (Arhgap30) of Mus musculus (Mouse).